Reading from the N-terminus, the 739-residue chain is Poly(A) polymerase alpha (739 aa).

The span at 1–17 shows a compositional bias: low complexity; the sequence is MPFPVTTQGSQQTQPPQ. The tract at residues 1-22 is disordered; it reads MPFPVTTQGSQQTQPPQRHYGI. 2 positions are modified to phosphoserine: Ser-10 and Ser-24. ATP contacts are provided by residues 100–102, Thr-109, 113–115, Asp-167, Lys-228, Tyr-237, and 246–247; these read FGS, DID, and GV. Mg(2+)-binding residues include Asp-113, Asp-115, and Asp-167. Glycyl lysine isopeptide (Lys-Gly) (interchain with G-Cter in SUMO) cross-links involve residues Lys-444, Lys-445, Lys-506, and Lys-507. A Nuclear localization signal 1 motif is present at residues 490–507; sequence RKQLHQLLPSHVLQKRKK. A ser/Thr-rich region spans residues 508–643; the sequence is HSTEGVKLTA…TKVPNPIVGV (136 aa). Low complexity predominate over residues 523–534; the sequence is LDLSMDSDNSMS. Positions 523-725 are disordered; the sequence is LDLSMDSDNS…SDIPALPANP (203 aa). Over residues 535-557 the composition is skewed to polar residues; it reads VPSPTSAMKTSPLNSSGSSQGRN. At Ser-537 the chain carries Phosphoserine; by MAPK. A Phosphoserine modification is found at Ser-558. Positions 566 to 582 are enriched in polar residues; it reads ASVTSIQASEVSVPQAN. 2 stretches are compositionally biased toward low complexity: residues 583–594 and 611–622; these read SSESPGGPSSES and TVSRVVSSTRLV. N6-acetyllysine occurs at positions 635 and 644. The short motif at 644–659 is the Nuclear localization signal 2 element; sequence KRTSSPNKEESPKKTK. 2 stretches are compositionally biased toward basic and acidic residues: residues 650–660 and 676–686; these read NKEESPKKTKT and GHDKTETKEQV. Residues 671–739 form a required for interaction with NUDT21 region; sequence CLALSGHDKT…KNSIKLRLNR (69 aa). Residues 691–715 show a composition bias toward polar residues; the sequence is SAVQSETVPASASLLASQKTSSTDL. Lys-730 is modified (N6-acetyllysine; alternate). Lys-730 is covalently cross-linked (Glycyl lysine isopeptide (Lys-Gly) (interchain with G-Cter in SUMO); alternate). Ser-732 carries the phosphoserine modification. An N6-acetyllysine; alternate modification is found at Lys-734. Lys-734 is covalently cross-linked (Glycyl lysine isopeptide (Lys-Gly) (interchain with G-Cter in SUMO); alternate).

Belongs to the poly(A) polymerase family. Monomer. Found in a complex with CPSF1, FIP1L1 and PAPOLA. Interacts with AHCYL1 and FIP1L1; the interaction with AHCYL1 seems to increase interaction with FIP1L1. Interacts with NUDT21; the interaction is diminished by acetylation. Interacts with KPNB1; the interaction promotes PAP nuclear import and is inhibited by acetylation of PAP. Mg(2+) is required as a cofactor. Requires Mn(2+) as cofactor. Polysumoylated. Varying sumoylation depending on tissue- and cell-type. Highly sumoylated in bladder and NIH 3T3 cells. Sumoylation is required for nuclear localization and enhances PAP stability. Desumoylated by SENP1. Inhibits polymerase activity. Post-translationally, hyperphosphorylation on multiple CDK2 consensus and non-consensus sites in the C-terminal Ser/Thr-rich region represses PAP activity in late M-phase. Phosphorylation/dephosphorylation may regulate the interaction between PAP and CPSF. In terms of processing, acetylated in the C-terminus. Acetylation decreases interaction with NUDT21 and KPNB1, and inhibits nuclear localization through inhibiting binding to the importin alpha/beta complex. As to expression, expressed in brain, thymus, lung, kidney, bladder, testis and spleen.

Its subcellular location is the nucleus. It catalyses the reaction RNA(n) + ATP = RNA(n)-3'-adenine ribonucleotide + diphosphate. Its function is as follows. Polymerase that creates the 3'-poly(A) tail of mRNA's. Also required for the endoribonucleolytic cleavage reaction at some polyadenylation sites. May acquire specificity through interaction with a cleavage and polyadenylation specificity factor (CPSF) at its C-terminus. This Mus musculus (Mouse) protein is Poly(A) polymerase alpha (Papola).